A 133-amino-acid chain; its full sequence is Fluoride-specific ion channel FluC 4 (133 aa).

Helical transmembrane passes span 7-27, 37-57, and 60-80; these read ILVL…SGYV, WGTF…AGLG, and LGGI…LLGG. Residues G79 and T82 each coordinate Na(+). A helical transmembrane segment spans residues 107 to 127; that stretch reads IVASALLCVLAVAAGYGGIMW.

Belongs to the fluoride channel Fluc/FEX (TC 1.A.43) family.

It localises to the cell inner membrane. The catalysed reaction is fluoride(in) = fluoride(out). With respect to regulation, na(+) is not transported, but it plays an essential structural role and its presence is essential for fluoride channel function. In terms of biological role, fluoride-specific ion channel. Important for reducing fluoride concentration in the cell, thus reducing its toxicity. The sequence is that of Fluoride-specific ion channel FluC 4 from Brucella abortus biovar 1 (strain 9-941).